A 481-amino-acid chain; its full sequence is Protein hedgehog (481 aa).

A lipid anchor (N-palmitoyl cysteine) is attached at C93. E157, E158, D163, T193, E194, D197, and D199 together coordinate Ca(2+). The Cholesterol glycine ester moiety is linked to residue G265.

Belongs to the hedgehog family. Interacts with shf. In terms of processing, the C-terminal part of the hedgehog protein precursor displays an autoproteolysis activity that results in the cleavage of the full-length protein into two parts (N-product and C-product). In addition, the C-terminal part displays a cholesterol transferase activity that results by the covalent attachment of a cholesterol moiety to the C-terminal of the newly generated N-product. The N-product is the active species in both local and long-range signaling, whereas the C-product has no signaling activity. Cholesterylation is required for N-product targeting to lipid rafts and multimerization. Post-translationally, N-palmitoylation by Rasp of the hedgehog N-product, within the secretory pathway, is required for the embryonic and larval patterning activities of the hedgehog signal.

It localises to the nucleus. Its subcellular location is the cytoplasm. It is found in the cell membrane. The enzyme catalyses glycyl-L-cysteinyl-[protein] + cholesterol + H(+) = [protein]-C-terminal glycyl cholesterol ester + N-terminal L-cysteinyl-[protein]. Functionally, the C-terminal part of the hedgehog protein precursor displays an autoproteolysis activity that results in the cleavage of the full-length protein into two parts (N-product and C-product). In addition, the C-terminal part displays a cholesterol transferase activity that results by the covalent attachment of a cholesterol moiety to the C-terminal of the newly generated N-product. Once cleaved, the C-product has no signaling activity and diffuses from the cell. The dually lipidated hedgehog protein N-product is a morphogen which is essential for a variety of patterning events during development. Establishes the anterior-posterior axis of the embryonic segments and patterns the larval imaginal disks. Binds to the patched (ptc) receptor, which functions in association with smoothened (smo), to activate the transcription of target genes wingless (wg), decapentaplegic (dpp) and ptc. In the absence of hh, ptc represses the constitutive signaling activity of smo through fused (fu). Essential component of a signaling pathway which regulates the Duox-dependent gut immune response to bacterial uracil; required to activate Cad99C-dependent endosome formation, norpA-dependent Ca2+ mobilization and p38 MAPK, which are essential steps in the Duox-dependent production of reactive oxygen species (ROS) in response to intestinal bacterial infection. During photoreceptor differentiation, it up-regulates transcription of Ubr3, which in turn promotes the hh-signaling pathway by mediating the ubiquitination and degradation of cos. The protein is Protein hedgehog of Drosophila persimilis (Fruit fly).